Here is an 85-residue protein sequence, read N- to C-terminus: MKVTLIAILTCAAVLVLHTTAAEELEAESQLMEVGMPDTELAAVDEERLFECSVSCEIEKEGNKDCKKKKCKGGWKCKFNMCVKA.

The first 22 residues, 1–22, serve as a signal peptide directing secretion; that stretch reads MKVTLIAILTCAAVLVLHTTAA. The propeptide occupies 23 to 48; sequence EELEAESQLMEVGMPDTELAAVDEER. 3 cysteine pairs are disulfide-bonded: Cys52/Cys66, Cys56/Cys77, and Cys71/Cys82.

This sequence belongs to the neurotoxin 12 (Hwtx-2) family. 02 (Hwtx-2) subfamily. As to expression, expressed by the venom gland.

It is found in the secreted. In terms of biological role, postsynaptic neurotoxin. This is U4-theraphotoxin-Hhn1e from Cyriopagopus hainanus (Chinese bird spider).